Reading from the N-terminus, the 205-residue chain is Large ribosomal subunit protein uL3 (205 aa).

It belongs to the universal ribosomal protein uL3 family. As to quaternary structure, part of the 50S ribosomal subunit. Forms a cluster with proteins L14 and L19.

In terms of biological role, one of the primary rRNA binding proteins, it binds directly near the 3'-end of the 23S rRNA, where it nucleates assembly of the 50S subunit. The protein is Large ribosomal subunit protein uL3 of Porphyromonas gingivalis (strain ATCC 33277 / DSM 20709 / CIP 103683 / JCM 12257 / NCTC 11834 / 2561).